The following is a 197-amino-acid chain: 22.7 kDa class IV heat shock protein (197 aa).

Positions 1–28 (MSLKPLNMLLVPFLLLILAADFPLKAKA) are cleaved as a signal peptide. The sHSP domain occupies 68-184 (PSITLSHARV…GPRMVSIVEE (117 aa)). The short motif at 194-197 (DELK) is the Prevents secretion from ER element.

The protein belongs to the small heat shock protein (HSP20) family. In terms of assembly, forms oligomeric structures.

It localises to the endoplasmic reticulum lumen. The sequence is that of 22.7 kDa class IV heat shock protein (HSP22.7) from Pisum sativum (Garden pea).